Here is a 150-residue protein sequence, read N- to C-terminus: Peptide methionine sulfoxide reductase MsrB (150 aa).

Residues 9-132 (EAELKRTLTK…NSAALKFIPF (124 aa)) enclose the MsrB domain. Cysteine 121 (nucleophile) is an active-site residue.

This sequence belongs to the MsrB Met sulfoxide reductase family.

It catalyses the reaction L-methionyl-[protein] + [thioredoxin]-disulfide + H2O = L-methionyl-(R)-S-oxide-[protein] + [thioredoxin]-dithiol. This is Peptide methionine sulfoxide reductase MsrB from Mycoplasma genitalium (strain ATCC 33530 / DSM 19775 / NCTC 10195 / G37) (Mycoplasmoides genitalium).